Consider the following 869-residue polypeptide: Leucine--tRNA ligase (869 aa).

The short motif at 42–52 (PYPSGKLHMGH) is the 'HIGH' region element. The 'KMSKS' region motif lies at 624–628 (TMSKS). Residue K627 participates in ATP binding.

This sequence belongs to the class-I aminoacyl-tRNA synthetase family.

The protein resides in the cytoplasm. The enzyme catalyses tRNA(Leu) + L-leucine + ATP = L-leucyl-tRNA(Leu) + AMP + diphosphate. This Nitrosomonas europaea (strain ATCC 19718 / CIP 103999 / KCTC 2705 / NBRC 14298) protein is Leucine--tRNA ligase.